Consider the following 109-residue polypeptide: Latartoxin-2a (109 aa).

Positions M1–S19 are cleaved as a signal peptide. The propeptide at K20 to R37 is removed in mature form. A Processing quadruplet motif motif is present at residues S34–R37. 5 cysteine pairs are disulfide-bonded: C39-C56, C46-C67, C55-C81, C69-C79, and C72-C93. Residue V108 is modified to Valine amide.

The protein belongs to the neurotoxin 19 (CSTX) family. 11 (latartoxin) subfamily. In terms of processing, contains 5 disulfide bonds. Post-translationally, cleavage of the propeptide depends on the processing quadruplet motif (XXXR, with at least one of X being E). Expressed by the venom gland.

The protein resides in the secreted. Insect toxin. Causes paralysis in larvae of C.vicina by depolarizing membranes at the neuromuscular junction. The chain is Latartoxin-2a from Lachesana tarabaevi (Spider).